A 97-amino-acid polypeptide reads, in one-letter code: Acylphosphatase (97 aa).

One can recognise an Acylphosphatase-like domain in the interval 5-92 (RAHVWISGRV…GEFVRFEITF (88 aa)). Catalysis depends on residues Arg20 and Asn38.

It belongs to the acylphosphatase family.

The catalysed reaction is an acyl phosphate + H2O = a carboxylate + phosphate + H(+). This Syntrophobacter fumaroxidans (strain DSM 10017 / MPOB) protein is Acylphosphatase (acyP).